Here is a 359-residue protein sequence, read N- to C-terminus: Peptide chain release factor 1 (359 aa).

The residue at position 236 (Gln236) is an N5-methylglutamine.

Belongs to the prokaryotic/mitochondrial release factor family. Post-translationally, methylated by PrmC. Methylation increases the termination efficiency of RF1.

The protein localises to the cytoplasm. Its function is as follows. Peptide chain release factor 1 directs the termination of translation in response to the peptide chain termination codons UAG and UAA. The chain is Peptide chain release factor 1 from Streptococcus pyogenes serotype M3 (strain ATCC BAA-595 / MGAS315).